A 193-amino-acid chain; its full sequence is DNA dC-&gt;dU-editing enzyme APOBEC-3H (193 aa).

The CMP/dCMP-type deaminase domain occupies 24-126 (YRRKTYLCYQ…WKYQQGLRHL (103 aa)). His54 is a Zn(2+) binding site. Glu56 functions as the Proton donor in the catalytic mechanism. Cys85 and Cys88 together coordinate Zn(2+).

This sequence belongs to the cytidine and deoxycytidylate deaminase family. In terms of assembly, homodimer. Zn(2+) is required as a cofactor. In terms of tissue distribution, expressed in peripheral blood mononuclear cells.

The protein resides in the cytoplasm. It catalyses the reaction a 2'-deoxycytidine in single-stranded DNA + H2O + H(+) = a 2'-deoxyuridine in single-stranded DNA + NH4(+). In terms of biological role, DNA deaminase (cytidine deaminase) which acts as an inhibitor of retrovirus replication and retrotransposon mobility via deaminase-dependent and -independent mechanisms. Selectively targets single-stranded DNA and does not deaminate double-stranded DNA or single- or double-stranded RNA. Exhibits single-stranded DNA deaminase activity (in vitro). Incorporates into the released virions of the virion infectivity factor (vif)-deficient feline immunodeficiency virus (FIV) and suppresses FIV infectivity, probably in a deaminase-dependent manner (in vitro). Induces G-to-A hypermutations in vif-deficient FIV (in vitro). The APOBEC3H/APOBEC3Z3 haplotype 5 exhibits antiviral activity against vif-proficient FIV, strains Petaluma, C36 and Shizuoka (in vitro). Does not exhibit inhibitory activity against feline leukemia virus (FeLV), feline endogenous retrovirus (RD-114 virus) or a long interspersed nuclear element-1 (LINE-1) retrotransposon (in vitro). The sequence is that of DNA dC-&gt;dU-editing enzyme APOBEC-3H from Felis catus (Cat).